The chain runs to 406 residues: NADH-ubiquinone oxidoreductase 49 kDa subunit (406 aa).

The protein belongs to the complex I 49 kDa subunit family. In terms of assembly, complex I is composed of 45 different subunits. Component of the iron-sulfur (IP) fragment of the enzyme.

Its subcellular location is the mitochondrion inner membrane. The enzyme catalyses a ubiquinone + NADH + 5 H(+)(in) = a ubiquinol + NAD(+) + 4 H(+)(out). Functionally, core subunit of the mitochondrial membrane respiratory chain NADH dehydrogenase (Complex I) that is believed to belong to the minimal assembly required for catalysis. Complex I functions in the transfer of electrons from NADH to the respiratory chain. The immediate electron acceptor for the enzyme is believed to be ubiquinone. This Dictyostelium discoideum (Social amoeba) protein is NADH-ubiquinone oxidoreductase 49 kDa subunit (nad7).